A 53-amino-acid chain; its full sequence is Large ribosomal subunit protein eL40 (53 aa).

Belongs to the eukaryotic ribosomal protein eL40 family.

In Pyrobaculum arsenaticum (strain DSM 13514 / JCM 11321 / PZ6), this protein is Large ribosomal subunit protein eL40.